Reading from the N-terminus, the 555-residue chain is Pyrophosphate--fructose 6-phosphate 1-phosphotransferase (555 aa).

G82 provides a ligand contact to diphosphate. R146 lines the substrate pocket. Mg(2+) is bound at residue D176. Residues 204 to 206, 243 to 244, 251 to 253, E312, and 428 to 431 each bind substrate; these read TID, KY, MGR, and YEGR. Catalysis depends on D206, which acts as the Proton acceptor.

It belongs to the phosphofructokinase type A (PFKA) family. PPi-dependent PFK group II subfamily. Clade 'Long' sub-subfamily. As to quaternary structure, homodimer. Mg(2+) serves as cofactor.

It localises to the cytoplasm. It carries out the reaction beta-D-fructose 6-phosphate + diphosphate = beta-D-fructose 1,6-bisphosphate + phosphate + H(+). It participates in carbohydrate degradation; glycolysis; D-glyceraldehyde 3-phosphate and glycerone phosphate from D-glucose: step 3/4. With respect to regulation, non-allosteric. In terms of biological role, catalyzes the phosphorylation of D-fructose 6-phosphate, the first committing step of glycolysis. Uses inorganic phosphate (PPi) as phosphoryl donor instead of ATP like common ATP-dependent phosphofructokinases (ATP-PFKs), which renders the reaction reversible, and can thus function both in glycolysis and gluconeogenesis. Consistently, PPi-PFK can replace the enzymes of both the forward (ATP-PFK) and reverse (fructose-bisphosphatase (FBPase)) reactions. This Borreliella burgdorferi (strain ATCC 35210 / DSM 4680 / CIP 102532 / B31) (Borrelia burgdorferi) protein is Pyrophosphate--fructose 6-phosphate 1-phosphotransferase.